The primary structure comprises 561 residues: Potassium-transporting ATPase potassium-binding subunit (561 aa).

11 consecutive transmembrane segments (helical) span residues 5–25, 60–80, 86–106, 131–151, 177–197, 247–267, 281–301, 376–396, 415–435, 489–509, and 531–551; these read LAAG…YVPL, CGYA…LYVL, VLPL…NTAV, GLAV…VALI, ILLP…VIQS, PTPL…VALT, LTVL…TTAA, GLYG…LLVG, ALAV…TVVL, LGLC…ALAG, and FAGL…FPVL.

This sequence belongs to the KdpA family. The system is composed of three essential subunits: KdpA, KdpB and KdpC.

It is found in the cell membrane. Part of the high-affinity ATP-driven potassium transport (or Kdp) system, which catalyzes the hydrolysis of ATP coupled with the electrogenic transport of potassium into the cytoplasm. This subunit binds the extracellular potassium ions and delivers the ions to the membrane domain of KdpB through an intramembrane tunnel. This Nocardia farcinica (strain IFM 10152) protein is Potassium-transporting ATPase potassium-binding subunit.